Reading from the N-terminus, the 825-residue chain is Cytosolic phospholipase A2 delta (825 aa).

The C2 domain occupies 14 to 133 (SPERLHGHPY…LPGQLLQKTF (120 aa)). Ca(2+)-binding residues include D47, D53, D103, D105, and D111. The region spanning 281 to 825 (DCCPKELSVR…SETRPLGVKT (545 aa)) is the PLA2c domain. 339–340 (GG) is a binding site for substrate. The active-site Nucleophile is S370. The active-site Proton acceptor is the D654.

It depends on Ca(2+) as a cofactor. In terms of tissue distribution, weakly or not expressed in most tissues. Detected in placenta of 17.5 dpc embryos.

The protein localises to the cytoplasm. It localises to the cytosol. It is found in the membrane. It catalyses the reaction a 1,2-diacyl-sn-glycero-3-phosphocholine + H2O = a 1-acyl-sn-glycero-3-phosphocholine + a fatty acid + H(+). The enzyme catalyses 1-hexadecanoyl-2-(5Z,8Z,11Z,14Z-eicosatetraenoyl)-sn-glycero-3-phosphocholine + H2O = 1-hexadecanoyl-sn-glycero-3-phosphocholine + (5Z,8Z,11Z,14Z)-eicosatetraenoate + H(+). It carries out the reaction 1-hexadecanoyl-2-(9Z,12Z-octadecadienoyl)-sn-glycero-3-phosphocholine + H2O = (9Z,12Z)-octadecadienoate + 1-hexadecanoyl-sn-glycero-3-phosphocholine + H(+). The catalysed reaction is 1-hexadecanoyl-2-(9Z-octadecenoyl)-sn-glycero-3-phosphocholine + H2O = 1-hexadecanoyl-sn-glycero-3-phosphocholine + (9Z)-octadecenoate + H(+). It catalyses the reaction 1-hexadecanoyl-2-(5Z,8Z,11Z,14Z-eicosatetraenoyl)-sn-glycero-3-phosphoethanolamine + H2O = 1-hexadecanoyl-sn-glycero-3-phosphoethanolamine + (5Z,8Z,11Z,14Z)-eicosatetraenoate + H(+). The enzyme catalyses 1-hexadecanoyl-2-(9Z,12Z-octadecadienoyl)-sn-glycero-3-phosphoethanolamine + H2O = 1-hexadecanoyl-sn-glycero-3-phosphoethanolamine + (9Z,12Z)-octadecadienoate + H(+). It carries out the reaction 1-hexadecanoyl-sn-glycero-3-phosphocholine + H2O = sn-glycerol 3-phosphocholine + hexadecanoate + H(+). It participates in lipid metabolism; fatty acid metabolism. Its activity is regulated as follows. Stimulated by cytosolic Ca(2+). Calcium-dependent phospholipase A2 that selectively hydrolyzes glycerophospholipids in the sn-2 position. Compared to its human ortholog, may have no preference for the fatty acid found at the sn-2 position. The sequence is that of Cytosolic phospholipase A2 delta from Mus musculus (Mouse).